Here is a 209-residue protein sequence, read N- to C-terminus: Large ribosomal subunit protein uL3 (209 aa).

Residues 127–166 (NFGGGSRTHGQSDRLRAPGSVGGSSDPSRTFKGTRMAGRM) are disordered.

It belongs to the universal ribosomal protein uL3 family. In terms of assembly, part of the 50S ribosomal subunit. Forms a cluster with proteins L14 and L19.

In terms of biological role, one of the primary rRNA binding proteins, it binds directly near the 3'-end of the 23S rRNA, where it nucleates assembly of the 50S subunit. This is Large ribosomal subunit protein uL3 from Chlorobaculum tepidum (strain ATCC 49652 / DSM 12025 / NBRC 103806 / TLS) (Chlorobium tepidum).